Reading from the N-terminus, the 1194-residue chain is Chitin synthase C (1194 aa).

2 disordered regions span residues 1–91 (MSLP…PNYL) and 136–177 (GAHG…RRKA). Basic and acidic residues predominate over residues 12–23 (PRREETSAFREP). A compositionally biased stretch (basic residues) spans 42–54 (PRHHRHHRSHSSR). Basic and acidic residues-rich tracts occupy residues 55 to 69 (HQHDIDEERAEEGGI) and 76 to 85 (VKPERGRMDP). Basic residues predominate over residues 150–164 (TRHRSKKRKGSRKIS). Residues 221–241 (IGLISIILMIAAFVGFLTFGF) traverse the membrane as a helical segment. 2 N-linked (GlcNAc...) asparagine glycosylation sites follow: Asn-351 and Asn-390. A helical transmembrane segment spans residues 476–496 (YVSLIFILSIVIVKFAFALLF). Residues Asn-582, Asn-608, Asn-885, and Asn-1014 are each glycosylated (N-linked (GlcNAc...) asparagine). 3 consecutive transmembrane segments (helical) span residues 1039–1059 (FVIFVELVGTVVLPAAISFTI), 1073–1093 (IIPLVLLALILGLPGVLVVVT), and 1097–1117 (LVYVLWMLVYLISLPIWNFVL).

The protein belongs to the chitin synthase family. Class V subfamily.

Its subcellular location is the cell membrane. The enzyme catalyses [(1-&gt;4)-N-acetyl-beta-D-glucosaminyl](n) + UDP-N-acetyl-alpha-D-glucosamine = [(1-&gt;4)-N-acetyl-beta-D-glucosaminyl](n+1) + UDP + H(+). Its function is as follows. Polymerizes chitin, a structural polymer of the cell wall and septum, by transferring the sugar moiety of UDP-GlcNAc to the non-reducing end of the growing chitin polymer. Responsible for synthesis of 30-40% of the chitin in the cells. ChsA and chsD play redundant functions in conidia formation. The chitin synthesized by the chsD-encoded isozyme contributes to the rigidity of the walls of germinating conidia, of the subapical region of hyphae, and of conidiophore vesicles, but is not necessary for normal morphology of these cells. In Emericella nidulans (strain FGSC A4 / ATCC 38163 / CBS 112.46 / NRRL 194 / M139) (Aspergillus nidulans), this protein is Chitin synthase C.